A 328-amino-acid polypeptide reads, in one-letter code: GMP reductase (328 aa).

Residue cysteine 174 is the Thioimidate intermediate of the active site. An NADP(+)-binding site is contributed by 203–226 (IIADGGIRTHGDIAKSIRFGASMV).

The protein belongs to the IMPDH/GMPR family. GuaC type 2 subfamily.

It catalyses the reaction IMP + NH4(+) + NADP(+) = GMP + NADPH + 2 H(+). Functionally, catalyzes the irreversible NADPH-dependent deamination of GMP to IMP. It functions in the conversion of nucleobase, nucleoside and nucleotide derivatives of G to A nucleotides, and in maintaining the intracellular balance of A and G nucleotides. The polypeptide is GMP reductase (Staphylococcus saprophyticus subsp. saprophyticus (strain ATCC 15305 / DSM 20229 / NCIMB 8711 / NCTC 7292 / S-41)).